Here is a 229-residue protein sequence, read N- to C-terminus: MNNMVLLKCKNVTKTYKTNKKKIIILNNINLSIYNSETISIIGDSGSGKSTLLYLLSGLDNPTTGKITFKGKEINKLSSSDRSYLRNKNFGFIYQFHHLLTDFSVLENVAMPALIGNFSVKHAKNLAYKLLLEVGLKNRINHKPSEISGGERQRAAIARSLINNPKIVFADEPTGNLDNTSSKKFFCLLKKVNVEKKTAFLVVTHNIKLAKKLDKTLEIKNGKLYKKNL.

Residues 7 to 229 (LKCKNVTKTY…KNGKLYKKNL (223 aa)) form the ABC transporter domain. Residue 43–50 (GDSGSGKS) participates in ATP binding.

It belongs to the ABC transporter superfamily. Lipoprotein translocase (TC 3.A.1.125) family. The complex is composed of two ATP-binding proteins (LolD) and two transmembrane proteins (LolC and LolE).

It localises to the cell membrane. In terms of biological role, part of the ABC transporter complex LolCDE involved in the translocation of lipoproteins, in an ATP-dependent manner. In Wigglesworthia glossinidia brevipalpis, this protein is Lipoprotein-releasing system ATP-binding protein LolD.